Here is a 458-residue protein sequence, read N- to C-terminus: ATP synthase subunit beta (458 aa).

148–155 (GGAGVGKT) lines the ATP pocket.

Belongs to the ATPase alpha/beta chains family. F-type ATPases have 2 components, CF(1) - the catalytic core - and CF(0) - the membrane proton channel. CF(1) has five subunits: alpha(3), beta(3), gamma(1), delta(1), epsilon(1). CF(0) has three main subunits: a(1), b(2) and c(9-12). The alpha and beta chains form an alternating ring which encloses part of the gamma chain. CF(1) is attached to CF(0) by a central stalk formed by the gamma and epsilon chains, while a peripheral stalk is formed by the delta and b chains.

The protein localises to the cell inner membrane. It catalyses the reaction ATP + H2O + 4 H(+)(in) = ADP + phosphate + 5 H(+)(out). Produces ATP from ADP in the presence of a proton gradient across the membrane. The catalytic sites are hosted primarily by the beta subunits. The polypeptide is ATP synthase subunit beta (Shewanella piezotolerans (strain WP3 / JCM 13877)).